Here is a 219-residue protein sequence, read N- to C-terminus: Uracil-DNA glycosylase (219 aa).

Residue aspartate 61 is the Proton acceptor of the active site.

It belongs to the uracil-DNA glycosylase (UDG) superfamily. UNG family.

Its subcellular location is the cytoplasm. It carries out the reaction Hydrolyzes single-stranded DNA or mismatched double-stranded DNA and polynucleotides, releasing free uracil.. Functionally, excises uracil residues from the DNA which can arise as a result of misincorporation of dUMP residues by DNA polymerase or due to deamination of cytosine. The chain is Uracil-DNA glycosylase from Neisseria gonorrhoeae (strain ATCC 700825 / FA 1090).